Here is a 226-residue protein sequence, read N- to C-terminus: Movement and silencing protein TGBp1 (226 aa).

Residues 1–115 form the (+)RNA virus helicase ATP-binding domain; it reads MDILIISLKS…EFSLEPHFYL (115 aa). Residues 116-226 form the (+)RNA virus helicase C-terminal domain; that stretch reads ETSFRVPRKV…KGLTYVRAGT (111 aa).

This sequence belongs to the Tymovirales TGBp1 protein family. As to quaternary structure, homodimer and homooligomer. Interacts with capsid protein. Interacts with host AGO1; this interaction targets the host protein for degradation, thereby suppressing the antiviral RNA silencing.

The protein localises to the host cytoplasm. Functionally, transports viral genome to neighboring plant cells directly through plasmosdesmata, without any budding. The movement protein allows efficient cell to cell propagation, by bypassing the host cell wall barrier. Increases plasmodesma size exclusion limit. Acts as a suppressor of RNA-mediated gene silencing, also known as post-transcriptional gene silencing (PTGS), a mechanism of plant viral defense that limits the accumulation of viral RNAs. The chain is Movement and silencing protein TGBp1 from Brassica campestris (Field mustard).